A 147-amino-acid chain; its full sequence is Basic phospholipase A2 beta-bungarotoxin A4 chain (147 aa).

The first 19 residues, 1-19 (MNPAHLLVLSAVCVSLLGA), serve as a signal peptide directing secretion. Positions 20-27 (ANIPPHPL) are excised as a propeptide. Intrachain disulfides connect Cys-54/Cys-146, Cys-56/Cys-72, Cys-71/Cys-127, Cys-78/Cys-120, Cys-88/Cys-113, and Cys-106/Cys-118. Tyr-55, Gly-57, and Gly-59 together coordinate Ca(2+). His-75 is a catalytic residue. Asp-76 contacts Ca(2+). Asp-121 is an active-site residue.

It belongs to the phospholipase A2 family. Group I subfamily. D49 sub-subfamily. Heterodimer; disulfide-linked. The A chain has phospholipase A2 activity and the B chain shows homology with the basic protease inhibitors. The cofactor is Ca(2+). As to expression, expressed by the venom gland.

Its subcellular location is the secreted. The enzyme catalyses a 1,2-diacyl-sn-glycero-3-phosphocholine + H2O = a 1-acyl-sn-glycero-3-phosphocholine + a fatty acid + H(+). Functionally, snake venom phospholipase A2 (PLA2) that shows presynaptic neurotoxicity. The A chain has phospholipase activity. PLA2 catalyzes the calcium-dependent hydrolysis of the 2-acyl groups in 3-sn-phosphoglycerides. The chain is Basic phospholipase A2 beta-bungarotoxin A4 chain from Bungarus candidus (Malayan krait).